The primary structure comprises 251 residues: Triosephosphate isomerase (251 aa).

9–11 (NWK) contributes to the substrate binding site. His-95 serves as the catalytic Electrophile. Glu-167 acts as the Proton acceptor in catalysis. Substrate contacts are provided by residues Gly-173, Ser-212, and 233 to 234 (GG).

It belongs to the triosephosphate isomerase family. In terms of assembly, homodimer.

The protein resides in the cytoplasm. The enzyme catalyses D-glyceraldehyde 3-phosphate = dihydroxyacetone phosphate. Its pathway is carbohydrate biosynthesis; gluconeogenesis. It functions in the pathway carbohydrate degradation; glycolysis; D-glyceraldehyde 3-phosphate from glycerone phosphate: step 1/1. Involved in the gluconeogenesis. Catalyzes stereospecifically the conversion of dihydroxyacetone phosphate (DHAP) to D-glyceraldehyde-3-phosphate (G3P). The protein is Triosephosphate isomerase of Pseudomonas paraeruginosa (strain DSM 24068 / PA7) (Pseudomonas aeruginosa (strain PA7)).